We begin with the raw amino-acid sequence, 958 residues long: Importin-13 (958 aa).

HEAT repeat units follow at residues 19–49 (ENVEKALHQLYYDPNIENKNLAQKWLMQAQV), 51–83 (PQAWHFSWLLLNMDKVPEIQYSAPAPCTSRSPA), 90–130 (PDQY…LSMM), 137–174 (AVADMVRMFQAEDSNVDGRARCLALLELLTVLPEEFQT), 189–226 (LAQECGSVFPLLEQLLQQQDSPGFIKQKVLKCFSSWVQ), 231–263 (LMDCENLIQAAFTSLQDPELFDTAVEAVVNAIS), 271–320 (VNTL…ALLD), 325–367 (WQSF…DDIL), 370–433 (EPDK…YEML), 435–471 (AELLSSLYDKLGRLLTNTEQPSTWQHTEALLYGFQSI), 482–517 (VVPGLIGLIPRISISNVQLADTVMFTIGALSEWLAD), 519–553 (PVMINNVLPLVLQALGNPELSISSVSTLKKICREC), 557–595 (LPPYAANIVAVSQEVLMKQIHKTSQCMWLMQALGFLLSA), 598–643 (VEEI…SNLF), 671–711 (PVVV…VKTL), 715–749 (FAPMVPQLCEMLGQMYSTIPQASAIDLTRQLVHIF), 756–798 (FPPI…ALKR), 810–840 (VKALFHCGVLSLKFPEAPTVKASCGFFTELL), 855–888 (ENGKVLLQAVLEGVGGQASRSLMDHFAEILFALN), and 892–926 (FSYLSIWIKEAMQQDGFPSARVSPEQKETFSQQIL). Residues 40–106 (AQKWLMQAQV…KSQLFTHITR (67 aa)) form the Importin N-terminal domain.

The protein belongs to the importin beta family.

It localises to the cytoplasm. It is found in the nucleus. Its function is as follows. Functions in nuclear protein import as nuclear transport receptor. Serves as receptor for nuclear localization signals (NLS) in cargo substrates. Is thought to mediate docking of the importin/substrate complex to the nuclear pore complex (NPC) through binding to nucleoporin and the complex is subsequently translocated through the pore by an energy requiring, Ran-dependent mechanism. At the nucleoplasmic side of the NPC, Ran binds to the importin, the importin/substrate complex dissociates and importin is re-exported from the nucleus to the cytoplasm where GTP hydrolysis releases Ran. The directionality of nuclear import is thought to be conferred by an asymmetric distribution of the GTP- and GDP-bound forms of Ran between the cytoplasm and nucleus. This is Importin-13 (IPO13) from Gallus gallus (Chicken).